The chain runs to 806 residues: Putative phage-related protein YobO (806 aa).

Residues 1-23 (MVHFKNCPDPSLNANSQSHPEFS) form a disordered region. Polar residues predominate over residues 12–21 (LNANSQSHPE). 6 PbH1 repeats span residues 199–221 (VEYG…DITS), 237–259 (SRYI…TTHY), 260–292 (SEYI…EIDD), 294–315 (SRHV…EVKA), 419–441 (SQNI…DINL), and 448–470 (TDYI…SIGG).

In Bacillus subtilis (strain 168), this protein is Putative phage-related protein YobO (yobO).